A 405-amino-acid chain; its full sequence is Saccharopepsin (405 aa).

Positions 1–22 are cleaved as a signal peptide; it reads MFSLKALLPLALLLVSANQVAA. Residues 23–76 constitute a propeptide, activation peptide; that stretch reads KVHKAKIYKHELSDEMKEVTFEQHLAHLGQKYLTQFEKANPEVVFSREHPFFTE. The Peptidase A1 domain occupies 91–402; that stretch reads YYTDITLGTP…DLGNNAVGLA (312 aa). Residue D109 is part of the active site. An intrachain disulfide couples C122 to C127. The N-linked (GlcNAc...) asparagine glycan is linked to N144. Residue D294 is part of the active site. Cysteines 328 and 361 form a disulfide. N345 carries N-linked (GlcNAc...) asparagine glycosylation.

It belongs to the peptidase A1 family.

The protein resides in the vacuole. It catalyses the reaction Hydrolysis of proteins with broad specificity for peptide bonds. Cleaves -Leu-Leu-|-Val-Tyr- bond in a synthetic substrate. Does not act on esters of Tyr or Arg.. Functionally, aspartyl protease implicated in the post-translational regulation of S.cerevisiae vacuolar proteinases. Acts on YSCB, on YSCY and on itself. This Saccharomyces cerevisiae (strain ATCC 204508 / S288c) (Baker's yeast) protein is Saccharopepsin (PEP4).